The following is a 407-amino-acid chain: Histidine--tRNA ligase (407 aa).

It belongs to the class-II aminoacyl-tRNA synthetase family. In terms of assembly, homodimer.

The protein localises to the cytoplasm. The enzyme catalyses tRNA(His) + L-histidine + ATP = L-histidyl-tRNA(His) + AMP + diphosphate + H(+). The chain is Histidine--tRNA ligase from Wolbachia pipientis subsp. Culex pipiens (strain wPip).